Here is a 191-residue protein sequence, read N- to C-terminus: Surfactant protein C (191 aa).

A propeptide spanning residues 1–23 is cleaved from the precursor; the sequence is MDVGSKEVLMESPPDYSAAPRGR. 2 S-palmitoyl cysteine lipidation sites follow: Cys-28 and Cys-29. Residues 59-191 constitute a propeptide that is removed on maturation; sequence HMSQKHTEMV…LCGEVPLYYI (133 aa). The region spanning 94–191 is the BRICHOS domain; it reads FSFGSTGLVV…LCGEVPLYYI (98 aa). A disulfide bond links Cys-121 and Cys-183.

Its subcellular location is the secreted. It localises to the extracellular space. It is found in the surface film. Its function is as follows. Pulmonary surfactant associated proteins promote alveolar stability by lowering the surface tension at the air-liquid interface in the peripheral air spaces. In Macaca mulatta (Rhesus macaque), this protein is Surfactant protein C (SFTPC).